The sequence spans 132 residues: CLAVATA3/ESR (CLE)-related protein 2-B (132 aa).

A signal peptide spans 1–26 (MASRMGMVAILSLFVCALVASTSVNA). The segment at 68 to 132 (NRASKQLDRE…IGPPPFLDRY (65 aa)) is disordered. Residues P82 and P85 each carry the hydroxyproline modification. O-linked (Ara...) hydroxyproline glycosylation occurs at P85.

This sequence belongs to the CLV3/ESR signal peptide family. The O-glycosylation (arabinosylation) of the hydroxyproline Pro-85 enhances binding affinity of the ESR2Bp peptide for its receptor. In terms of tissue distribution, seed endosperm.

It is found in the secreted. Its subcellular location is the extracellular space. Functionally, extracellular signal peptide that regulates cell fate. In Zea mays (Maize), this protein is CLAVATA3/ESR (CLE)-related protein 2-B.